Here is a 195-residue protein sequence, read N- to C-terminus: Probable GTP-binding protein EngB (195 aa).

Residues 22–195 form the EngB-type G domain; sequence GRPEVALAGR…WAALLPFVAS (174 aa). Residues 30–37, 57–61, 75–78, 142–145, and 174–176 contribute to the GTP site; these read GRSNVGKS, GKTQT, DVPG, TKAD, and FSA. S37 and T59 together coordinate Mg(2+).

Belongs to the TRAFAC class TrmE-Era-EngA-EngB-Septin-like GTPase superfamily. EngB GTPase family. It depends on Mg(2+) as a cofactor.

Functionally, necessary for normal cell division and for the maintenance of normal septation. The polypeptide is Probable GTP-binding protein EngB (Geobacillus kaustophilus (strain HTA426)).